Consider the following 436-residue polypeptide: Adenylosuccinate synthetase (436 aa).

GTP-binding positions include 13–19 and 41–43; these read GDEGKGK and GHT. D14 acts as the Proton acceptor in catalysis. Mg(2+) is bound by residues D14 and G41. Residues 14-17, 39-42, T131, R145, Q226, T241, and R309 each bind IMP; these read DEGK and NAGH. H42 acts as the Proton donor in catalysis. 305-311 is a substrate binding site; the sequence is TVTGRKR. Residues R311, 337–339, and 419–421 contribute to the GTP site; these read KLD and STG.

This sequence belongs to the adenylosuccinate synthetase family. As to quaternary structure, homodimer. Mg(2+) is required as a cofactor.

The protein resides in the cytoplasm. The catalysed reaction is IMP + L-aspartate + GTP = N(6)-(1,2-dicarboxyethyl)-AMP + GDP + phosphate + 2 H(+). It functions in the pathway purine metabolism; AMP biosynthesis via de novo pathway; AMP from IMP: step 1/2. Its function is as follows. Plays an important role in the de novo pathway of purine nucleotide biosynthesis. Catalyzes the first committed step in the biosynthesis of AMP from IMP. In Aromatoleum aromaticum (strain DSM 19018 / LMG 30748 / EbN1) (Azoarcus sp. (strain EbN1)), this protein is Adenylosuccinate synthetase.